The primary structure comprises 81 residues: Keratin-associated protein 19-3 (81 aa).

The protein belongs to the KRTAP type 19 family. Interacts with hair keratins.

In the hair cortex, hair keratin intermediate filaments are embedded in an interfilamentous matrix, consisting of hair keratin-associated proteins (KRTAP), which are essential for the formation of a rigid and resistant hair shaft through their extensive disulfide bond cross-linking with abundant cysteine residues of hair keratins. The matrix proteins include the high-sulfur and high-glycine-tyrosine keratins. The polypeptide is Keratin-associated protein 19-3 (KRTAP19-3) (Homo sapiens (Human)).